Here is a 591-residue protein sequence, read N- to C-terminus: Thiol:disulfide interchange protein DsbD 1 (591 aa).

The N-terminal stretch at 1 to 18 (MRRLLTLILLLVALPAGA) is a signal peptide. The Periplasmic portion of the chain corresponds to 19–175 (GLFDSRPGAS…GPLEHKGKRS (157 aa)). 2 cysteine pairs are disulfide-bonded: cysteine 134–cysteine 140 and cysteine 191–cysteine 313. Residues 176–196 (LLFFFLAGLTLTFTPCVLPML) form a helical membrane-spanning segment. Residues 197-213 (PILSGVVLRGRPGGGRG) lie on the Cytoplasmic side of the membrane. Residues 214–234 (FVLSLAYVLPMALCFALLGAL) traverse the membrane as a helical segment. Topologically, residues 235-251 (MGMFGASLNLQAQLQSP) are periplasmic. A helical membrane pass occupies residues 252-272 (WVLVPFAAFFALFAVAMFGFF). Residues 273 to 295 (ELRLPGFIREPLDRLAGDARGGS) are Cytoplasmic-facing. A helical transmembrane segment spans residues 296 to 316 (ILGAATLGVLSSLLVSPCVSA). Over 317 to 338 (PLAASLLYISASGDAWGGGLQL) the chain is Periplasmic. The chain crosses the membrane as a helical span at residues 339–359 (FALGLGMGTPLVVFGAGGGAL). The Cytoplasmic segment spans residues 360–365 (LPKSGA). The chain crosses the membrane as a helical span at residues 366 to 386 (WMNGVRNAFGVLLLAVAVWLL). Topologically, residues 387–392 (ERVVSG) are periplasmic. Residues 393–413 (PVALMLWGMLAGGAGLALGAL) form a helical membrane-spanning segment. Over 414–423 (EFTPKSAARR) the chain is Cytoplasmic. A helical membrane pass occupies residues 424–444 (LLQLLGLMFLTYAVAAWIGAL). At 445 to 591 (QGESDPIHPL…ERLRRAATRQ (147 aa)) the chain is on the periplasmic side. Residues 452 to 589 (HPLGRSVPSI…LAERLRRAAT (138 aa)) enclose the Thioredoxin domain. A disulfide bridge links cysteine 504 with cysteine 507.

This sequence belongs to the thioredoxin family. DsbD subfamily.

Its subcellular location is the cell inner membrane. It catalyses the reaction [protein]-dithiol + NAD(+) = [protein]-disulfide + NADH + H(+). The catalysed reaction is [protein]-dithiol + NADP(+) = [protein]-disulfide + NADPH + H(+). Its function is as follows. Required to facilitate the formation of correct disulfide bonds in some periplasmic proteins and for the assembly of the periplasmic c-type cytochromes. Acts by transferring electrons from cytoplasmic thioredoxin to the periplasm. This transfer involves a cascade of disulfide bond formation and reduction steps. The polypeptide is Thiol:disulfide interchange protein DsbD 1 (Pseudomonas aeruginosa (strain ATCC 15692 / DSM 22644 / CIP 104116 / JCM 14847 / LMG 12228 / 1C / PRS 101 / PAO1)).